A 114-amino-acid polypeptide reads, in one-letter code: Large ribosomal subunit protein bL19 (114 aa).

The protein belongs to the bacterial ribosomal protein bL19 family.

In terms of biological role, this protein is located at the 30S-50S ribosomal subunit interface and may play a role in the structure and function of the aminoacyl-tRNA binding site. The sequence is that of Large ribosomal subunit protein bL19 (rplS) from Listeria monocytogenes serovar 1/2a (strain ATCC BAA-679 / EGD-e).